Consider the following 600-residue polypeptide: Elongation factor 4 (600 aa).

One can recognise a tr-type G domain in the interval 5-187 (KYIRNFSIVA…EIVEKIPAPE (183 aa)). Residues 17-22 (DHGKST) and 134-137 (NKVD) each bind GTP.

This sequence belongs to the TRAFAC class translation factor GTPase superfamily. Classic translation factor GTPase family. LepA subfamily.

The protein localises to the cell membrane. The catalysed reaction is GTP + H2O = GDP + phosphate + H(+). In terms of biological role, required for accurate and efficient protein synthesis under certain stress conditions. May act as a fidelity factor of the translation reaction, by catalyzing a one-codon backward translocation of tRNAs on improperly translocated ribosomes. Back-translocation proceeds from a post-translocation (POST) complex to a pre-translocation (PRE) complex, thus giving elongation factor G a second chance to translocate the tRNAs correctly. Binds to ribosomes in a GTP-dependent manner. This Clostridium perfringens (strain 13 / Type A) protein is Elongation factor 4.